The chain runs to 662 residues: Probable quinol oxidase subunit 1 (662 aa).

A run of 2 helical transmembrane segments spans residues 14 to 34 and 58 to 78; these read WMIT…IAVI and IMYL…ALLI. Histidine 102 lines the Fe(II)-heme a pocket. Helical transmembrane passes span 103–123, 140–160, 187–207, 228–248, 273–293, 311–331, 336–356, and 376–396; these read GVIM…NIVV, VSFW…IIGG, IAIQ…FVTI, FITT…LALM, FFWV…FGIY, MVWA…HHFF, GALI…PTGV, and MLFS…GVML. Residues histidine 279, tyrosine 283, histidine 328, and histidine 329 each contribute to the Cu cation site. A cross-link (1'-histidyl-3'-tyrosine (His-Tyr)) is located at residues 279–283; the sequence is HPEVY. Histidine 414 provides a ligand contact to heme a3. 5 helical membrane passes run 415–435, 451–471, 493–513, 587–604, and 608–627; these read FHYT…IFWY, CFWF…ILGL, ISTI…VSIV, PVGF…FFLI, and VIPA…YRSF. Fe(II)-heme a is bound at residue histidine 416.

This sequence belongs to the heme-copper respiratory oxidase family. The cofactor is Cu cation. It depends on ferriheme a as a cofactor. Heme A3. is required as a cofactor.

It is found in the cell membrane. The enzyme catalyses 2 a quinol + O2 = 2 a quinone + 2 H2O. The protein operates within energy metabolism; oxidative phosphorylation. Functionally, catalyzes quinol oxidation with the concomitant reduction of oxygen to water. The chain is Probable quinol oxidase subunit 1 (qoxB) from Staphylococcus aureus (strain MRSA252).